Reading from the N-terminus, the 420-residue chain is ATP phosphoribosyltransferase regulatory subunit (420 aa).

The protein belongs to the class-II aminoacyl-tRNA synthetase family. HisZ subfamily. In terms of assembly, heteromultimer composed of HisG and HisZ subunits.

It is found in the cytoplasm. It participates in amino-acid biosynthesis; L-histidine biosynthesis; L-histidine from 5-phospho-alpha-D-ribose 1-diphosphate: step 1/9. Required for the first step of histidine biosynthesis. May allow the feedback regulation of ATP phosphoribosyltransferase activity by histidine. This is ATP phosphoribosyltransferase regulatory subunit from Synechococcus sp. (strain ATCC 27144 / PCC 6301 / SAUG 1402/1) (Anacystis nidulans).